Consider the following 295-residue polypeptide: GTPase Era (295 aa).

The Era-type G domain occupies 5–172; sequence YCGYAAIIGR…EQAVHQLMPE (168 aa). The interval 13–20 is G1; that stretch reads GRPNVGKS. 13 to 20 is a binding site for GTP; the sequence is GRPNVGKS. The interval 39–43 is G2; it reads QTTRY. Residues 60–63 form a G3 region; sequence DTPG. GTP is bound by residues 60–64 and 121–124; these read DTPGL and NKVD. Residues 121–124 are G4; it reads NKVD. The segment at 151-153 is G5; sequence LSA. In terms of domain architecture, KH type-2 spans 203–279; sequence LGQEIPYSLA…FLQLWVKVKS (77 aa).

The protein belongs to the TRAFAC class TrmE-Era-EngA-EngB-Septin-like GTPase superfamily. Era GTPase family. In terms of assembly, monomer.

It localises to the cytoplasm. The protein resides in the cell inner membrane. Functionally, an essential GTPase that binds both GDP and GTP, with rapid nucleotide exchange. Plays a role in 16S rRNA processing and 30S ribosomal subunit biogenesis and possibly also in cell cycle regulation and energy metabolism. The sequence is that of GTPase Era from Coxiella burnetii (strain RSA 331 / Henzerling II).